The following is a 155-amino-acid chain: Large ribosomal subunit protein eL24 (155 aa).

The segment covering 93 to 123 (KRNARPETRNATRAKHAEAAKERKEKEAERR) has biased composition (basic and acidic residues). The segment at 93–155 (KRNARPETRN…SAPKVQATSR (63 aa)) is disordered.

It belongs to the eukaryotic ribosomal protein eL24 family.

The polypeptide is Large ribosomal subunit protein eL24 (RPL24) (Yarrowia lipolytica (strain CLIB 122 / E 150) (Yeast)).